The sequence spans 462 residues: Probable serine/threonine-protein kinase DDB_G0286841 (462 aa).

The region spanning 64 to 358 is the Protein kinase domain; sequence FNFLKVISKG…VDEVKCHPFF (295 aa). Residues 70–78 and lysine 93 contribute to the ATP site; that span reads ISKGGFGKV. The active-site Proton acceptor is aspartate 188. Positions 359–462 constitute an AGC-kinase C-terminal domain; that stretch reads SEINWKIYED…LFIDFDFPTY (104 aa). The span at 414-439 shows a compositional bias: low complexity; sequence NIYKNNNNNNNNNNNNNNNNNNNNNN. The segment at 414 to 447 is disordered; sequence NIYKNNNNNNNNNNNNNNNNNNNNNNDDNDDENN.

It belongs to the protein kinase superfamily. AGC Ser/Thr protein kinase family.

It carries out the reaction L-seryl-[protein] + ATP = O-phospho-L-seryl-[protein] + ADP + H(+). The catalysed reaction is L-threonyl-[protein] + ATP = O-phospho-L-threonyl-[protein] + ADP + H(+). This is Probable serine/threonine-protein kinase DDB_G0286841 from Dictyostelium discoideum (Social amoeba).